The following is a 289-amino-acid chain: ATP synthase subunit gamma, mitochondrial (289 aa).

Belongs to the ATPase gamma chain family. In terms of assembly, F-type ATPases have 2 components, CF(1) - the catalytic core - and CF(0) - the membrane proton channel. CF(1) has five subunits: alpha(3), beta(3), gamma(1), delta(1), epsilon(1). CF(0) has three main subunits: a, b and c.

It localises to the mitochondrion. The protein resides in the mitochondrion inner membrane. In terms of biological role, mitochondrial membrane ATP synthase (F(1)F(0) ATP synthase or Complex V) produces ATP from ADP in the presence of a proton gradient across the membrane which is generated by electron transport complexes of the respiratory chain. F-type ATPases consist of two structural domains, F(1) - containing the extramembraneous catalytic core, and F(0) - containing the membrane proton channel, linked together by a central stalk and a peripheral stalk. During catalysis, ATP synthesis in the catalytic domain of F(1) is coupled via a rotary mechanism of the central stalk subunits to proton translocation. Part of the complex F(1) domain and the central stalk which is part of the complex rotary element. The gamma subunit protrudes into the catalytic domain formed of alpha(3)beta(3). Rotation of the central stalk against the surrounding alpha(3)beta(3) subunits leads to hydrolysis of ATP in three separate catalytic sites on the beta subunits. This is ATP synthase subunit gamma, mitochondrial (ATP3) from Kluyveromyces lactis (strain ATCC 8585 / CBS 2359 / DSM 70799 / NBRC 1267 / NRRL Y-1140 / WM37) (Yeast).